The primary structure comprises 138 residues: Nucleoside diphosphate kinase (138 aa).

Lys-9, Phe-57, Arg-85, Thr-91, Arg-102, and Asn-112 together coordinate ATP. Residue His-120 is the Pros-phosphohistidine intermediate of the active site.

It belongs to the NDK family. Homotetramer. Mg(2+) serves as cofactor.

Its subcellular location is the cytoplasm. The catalysed reaction is a 2'-deoxyribonucleoside 5'-diphosphate + ATP = a 2'-deoxyribonucleoside 5'-triphosphate + ADP. It catalyses the reaction a ribonucleoside 5'-diphosphate + ATP = a ribonucleoside 5'-triphosphate + ADP. Major role in the synthesis of nucleoside triphosphates other than ATP. The ATP gamma phosphate is transferred to the NDP beta phosphate via a ping-pong mechanism, using a phosphorylated active-site intermediate. This Streptococcus agalactiae serotype V (strain ATCC BAA-611 / 2603 V/R) protein is Nucleoside diphosphate kinase.